The chain runs to 238 residues: Exosome complex exonuclease RRP46 homolog (238 aa).

The interval S174–L194 is disordered. The segment covering P183–R192 has biased composition (basic and acidic residues).

Belongs to the RNase PH family. In terms of assembly, homodimer or monomer when reduced or oxidized, respectively. Component of the exosome core complex.

It localises to the nucleus. The protein resides in the nucleolus. Functionally, probable component of the exosome 3'-&gt;5' exoribonuclease complex, a complex that degrades inherently unstable mRNAs containing AU-rich elements (AREs) within their 3'-untranslated regions. May form a homodimer separately from exosome complexes and function in DNA cleavage process. Binds double-stranded DNA (dsDNA) and single-stranded RNA (ssRNA), and possesses hydrolytic DNase and phosphorolytic RNase activities in vitro. The chain is Exosome complex exonuclease RRP46 homolog (RRP46) from Oryza sativa subsp. japonica (Rice).